Consider the following 77-residue polypeptide: Acyl carrier protein (77 aa).

The region spanning 1–77 (MSVEAKVKKI…DAIEYIRKKS (77 aa)) is the Carrier domain. An O-(pantetheine 4'-phosphoryl)serine modification is found at serine 37.

The protein belongs to the acyl carrier protein (ACP) family. In terms of processing, 4'-phosphopantetheine is transferred from CoA to a specific serine of apo-ACP by AcpS. This modification is essential for activity because fatty acids are bound in thioester linkage to the sulfhydryl of the prosthetic group.

Its subcellular location is the cytoplasm. The protein operates within lipid metabolism; fatty acid biosynthesis. Its function is as follows. Carrier of the growing fatty acid chain in fatty acid biosynthesis. The sequence is that of Acyl carrier protein from Desulforapulum autotrophicum (strain ATCC 43914 / DSM 3382 / VKM B-1955 / HRM2) (Desulfobacterium autotrophicum).